The chain runs to 92 residues: MPRSLKKGPFIDLHLLKKVEKAVESGDKKPLRTWSRRSTIFPNMIGLTIAVHNGRQHVPVFVTDEMVGHKLGEFAPTRTYRGHAADKKAKKK.

It belongs to the universal ribosomal protein uS19 family.

Functionally, protein S19 forms a complex with S13 that binds strongly to the 16S ribosomal RNA. The sequence is that of Small ribosomal subunit protein uS19 from Shigella boydii serotype 18 (strain CDC 3083-94 / BS512).